A 1818-amino-acid chain; its full sequence is Protein encore (1818 aa).

Disordered regions lie at residues 47-68 (ANSS…GVSG), 123-282 (SAAG…NSSN), and 317-413 (AERH…GFIS). Positions 52 to 66 (VGSGSGPGPGSGAGV) are enriched in gly residues. The span at 124 to 137 (AAGSSNLGRQNSFG) shows a compositional bias: polar residues. A compositionally biased stretch (basic residues) spans 141–152 (GNMKGKHLTRSH). 4 stretches are compositionally biased toward low complexity: residues 156-179 (ESTS…QLQG), 186-199 (NNNN…AQSA), 217-233 (QQPQ…QQSV), and 266-282 (NSNG…NSSN). Residues Ser267 and Ser270 each carry the phosphoserine modification. Residues 317 to 328 (AERHDRHERHEM) are compositionally biased toward basic and acidic residues. Position 336 is a phosphoserine (Ser336). Residues 338–348 (NHDEEPYHYEP) show a composition bias toward basic and acidic residues. 2 stretches are compositionally biased toward low complexity: residues 372–381 (NLGGSSSGSI) and 391–410 (NCNN…NTSG). Positions 444 to 508 (RNILLKIEKD…QCVIVAVAKN (65 aa)) constitute an R3H domain. Positions 510 to 576 (RIPEIRFQSL…ARSRIFSRTG (67 aa)) constitute an SUZ domain. Ser535 bears the Phosphoserine mark. The segment covering 557-568 (FEEREEDYDRAR) has biased composition (basic and acidic residues). Disordered stretches follow at residues 557–806 (FEER…SYEQ), 885–916 (QEQE…SQTP), 936–959 (PYSQ…EEPK), 1176–1249 (GQAP…YNPS), 1332–1648 (AAAG…LVSH), and 1684–1709 (GAGA…RSHI). Residues 592–606 (YGGWEQQQQQQKQSQ) show a composition bias toward low complexity. Positions 644 to 655 (NYGGPPSSGGPG) are enriched in gly residues. The span at 678–695 (QDSTGSTPWRLSPSSSGS) shows a compositional bias: polar residues. A compositionally biased stretch (low complexity) spans 713 to 771 (SGNQYQSQNQGNSSSGGYNNYRKSSPHQQQQSQQQQQSQQHHQQQLQQPQQLHQQSSQQ). The segment covering 772–784 (YATTELSCSSTES) has biased composition (polar residues). The span at 893–904 (AGPSSSGSATSS) shows a compositional bias: low complexity. The segment covering 1176–1197 (GQAPMQQQAPHTGAGTTTGPPT) has biased composition (low complexity). Residues 1220-1231 (SSNGSVVTSSAY) are compositionally biased toward polar residues. Over residues 1381–1392 (ASQSAPSTPAAP) the composition is skewed to low complexity. Over residues 1430–1443 (TPHYYQGQNSNEGY) the composition is skewed to polar residues. The span at 1503-1521 (ASPSSVSLGGASSSGGANS) shows a compositional bias: low complexity. Polar residues-rich tracts occupy residues 1554–1565 (AANSSPGVSSYE) and 1579–1596 (FRSQ…VSQR). Residues 1608-1633 (SHESSNNSPNSIVGSQSNSAANTPNA) are compositionally biased toward low complexity. Over residues 1684–1705 (GAGASGAAGSNGGHQPGGGGGA) the composition is skewed to gly residues.

Interacts with hfp; however, given the nuclear localization of hfp, the relevance of such interaction is unclear. Interacts with CycE, Cul1, and the SCF-proteasome complex. As to expression, expressed in all germline cells of the germarium including the stem cells and dividing cystocytes.

It is found in the cytoplasm. Functionally, required for the regulation of germline mitosis, karyosome formation, and establishment of dorsoventral (DS) polarity of the egg and embryo. Involved in proper grk mRNA localization and translation in the oocyte. May control germline mitosis by facilitating the cyclin E (CycE) proteolysis by the SCF-ubiquitin-proteasome complex. This Drosophila melanogaster (Fruit fly) protein is Protein encore (enc).